The following is a 73-amino-acid chain: MWFCIDLGANVFKEARALAGKKNRRVLQYILGLNIFKRELIPPCKDPDPSQIQILLKNYILKNVSTVFTYYCQ.

Belongs to the asfivirus DP63R family.

This is an uncharacterized protein from African swine fever virus (isolate Tick/Malawi/Lil 20-1/1983) (ASFV).